A 288-amino-acid chain; its full sequence is MKGIYSALLVSFDKDGNINEKGLREIIRHNIDVCKIDGLYVGGSTGENFMLSTDEKKRIFEIAMDEAKGQVKLIAQVGSVNLKEAVELAKFTTDLGYDAISAVTPFYYKFDFNEIKHYYETIINSVDNKLIIYSIPFLTGVNMSIEQFAELFENDKIIGVKFTAADFYLLERMRKAFPDKLIFAGFDEMMLPATVLGVDGAIGSTFNVNGVRARQIFEAAQKGDIETALEVQHVTNDLITDILNNGLYQTIKLILQEQGVDAGYCRQPMKEATEEMIAKAKEINKKYF.

Aceneuramate is bound by residues Ser-44 and Thr-45. The active-site Proton donor is the Tyr-133. The Schiff-base intermediate with substrate role is filled by Lys-161. Aceneuramate is bound by residues Thr-163, Gly-185, Asp-187, Glu-188, and Ser-204.

This sequence belongs to the DapA family. NanA subfamily. In terms of assembly, homotetramer.

It is found in the cytoplasm. It carries out the reaction aceneuramate = aldehydo-N-acetyl-D-mannosamine + pyruvate. Its pathway is amino-sugar metabolism; N-acetylneuraminate degradation; D-fructose 6-phosphate from N-acetylneuraminate: step 1/5. Catalyzes the reversible aldol cleavage of N-acetylneuraminic acid (sialic acid; Neu5Ac) to form pyruvate and N-acetylmannosamine (ManNAc) via a Schiff base intermediate. The polypeptide is N-acetylneuraminate lyase (Clostridium perfringens (strain ATCC 13124 / DSM 756 / JCM 1290 / NCIMB 6125 / NCTC 8237 / Type A)).